Consider the following 344-residue polypeptide: S-adenosylmethionine:tRNA ribosyltransferase-isomerase (344 aa).

It belongs to the QueA family. As to quaternary structure, monomer.

Its subcellular location is the cytoplasm. The enzyme catalyses 7-aminomethyl-7-carbaguanosine(34) in tRNA + S-adenosyl-L-methionine = epoxyqueuosine(34) in tRNA + adenine + L-methionine + 2 H(+). The protein operates within tRNA modification; tRNA-queuosine biosynthesis. In terms of biological role, transfers and isomerizes the ribose moiety from AdoMet to the 7-aminomethyl group of 7-deazaguanine (preQ1-tRNA) to give epoxyqueuosine (oQ-tRNA). This is S-adenosylmethionine:tRNA ribosyltransferase-isomerase from Thiobacillus denitrificans (strain ATCC 25259 / T1).